A 153-amino-acid chain; its full sequence is Endoribonuclease YbeY (153 aa).

Zn(2+)-binding residues include His-118, His-122, and His-128.

It belongs to the endoribonuclease YbeY family. Requires Zn(2+) as cofactor.

Its subcellular location is the cytoplasm. In terms of biological role, single strand-specific metallo-endoribonuclease involved in late-stage 70S ribosome quality control and in maturation of the 3' terminus of the 16S rRNA. This chain is Endoribonuclease YbeY, found in Chloroflexus aggregans (strain MD-66 / DSM 9485).